Here is a 432-residue protein sequence, read N- to C-terminus: E3 ubiquitin-protein ligase RNF135 (432 aa).

The RING-type zinc-finger motif lies at 21 to 63 (CIICQGLLDWPATLPCGHSFCRHCLEALWGARDARRWACPTCR). Residues 95–121 (GSDPAHCPCPGSSSLSSAAARPRRRPE) form a disordered region. Positions 102–114 (PCPGSSSLSSAAA) are enriched in low complexity. 2 coiled-coil regions span residues 121–156 (ELQR…QNQR) and 191–216 (DTAA…ESVT). The 192-residue stretch at 241–432 (PDQSHPALRR…NYLIIKQVKV (192 aa)) folds into the B30.2/SPRY domain.

Homodimer. Interacts (homodimer) with RIGI (double-stranded RNA-bound oligomeric form); involved in both RIGI ubiquitination, oligomerization into filaments associated with viral RNAs and the bridging of these filaments. Interacts with UBE2D3 and UBE2N; E2 ubiquitin ligases involved in RNF135-mediated ubiquitination of RIGI and activation of the RIG-I signaling pathway. Interacts with PCBP2. (Microbial infection) Cleaved and inactivated by hepatitis C virus NS3/NS4A. Expressed in skeletal muscle, spleen, kidney, placenta, prostate, stomach, thyroid and tongue. Also weakly expressed in heart, thymus, liver and lung.

The protein resides in the cytoplasm. Its subcellular location is the stress granule. The catalysed reaction is S-ubiquitinyl-[E2 ubiquitin-conjugating enzyme]-L-cysteine + [acceptor protein]-L-lysine = [E2 ubiquitin-conjugating enzyme]-L-cysteine + N(6)-ubiquitinyl-[acceptor protein]-L-lysine.. It participates in protein modification; protein ubiquitination. E2-dependent E3 ubiquitin-protein ligase that functions as a RIGI coreceptor in the sensing of viral RNAs in cell cytoplasm and the activation of the antiviral innate immune response. Together with the UBE2D3, UBE2N and UB2V1 E2 ligases, catalyzes the 'Lys-63'-linked polyubiquitination of RIGI oligomerized on viral RNAs, an essential step in the activation of the RIG-I signaling pathway. Through a ubiquitin-independent parallel mechanism, which consists in bridging RIGI filaments forming on longer viral RNAs, further activates the RIG-I signaling pathway. This second mechanism that synergizes with the ubiquitin-dependent one would thereby allow an RNA length-dependent regulation of the RIG-I signaling pathway. Associated with the E2 ligase UBE2N, also constitutively synthesizes unanchored 'Lys-63'-linked polyubiquitin chains that may also activate the RIG-I signaling pathway. In Homo sapiens (Human), this protein is E3 ubiquitin-protein ligase RNF135.